Reading from the N-terminus, the 347-residue chain is NADH-ubiquinone oxidoreductase chain 2 (347 aa).

Transmembrane regions (helical) follow at residues 3–23 (PPIL…VLTS), 25–45 (HWML…PILM), 59–79 (YFLM…INLL), 96–116 (TLMT…FWVP), 122–142 (ISLS…LSVL), 153–173 (LLLL…LNQT), 178–198 (ILAY…IYNP), 200–220 (MMLL…MLFM), 237–257 (MPLI…LPPL), 274–294 (EMII…YFYM), and 325–345 (FLPP…IISI).

This sequence belongs to the complex I subunit 2 family. In terms of assembly, core subunit of respiratory chain NADH dehydrogenase (Complex I) which is composed of 45 different subunits. Interacts with TMEM242.

The protein localises to the mitochondrion inner membrane. It carries out the reaction a ubiquinone + NADH + 5 H(+)(in) = a ubiquinol + NAD(+) + 4 H(+)(out). In terms of biological role, core subunit of the mitochondrial membrane respiratory chain NADH dehydrogenase (Complex I) which catalyzes electron transfer from NADH through the respiratory chain, using ubiquinone as an electron acceptor. Essential for the catalytic activity and assembly of complex I. This Paradoxurus hermaphroditus (Asian palm civet) protein is NADH-ubiquinone oxidoreductase chain 2.